We begin with the raw amino-acid sequence, 79 residues long: Aquaporin Z (79 aa).

The next 2 helical transmembrane spans lie at 4–24 and 33–53; these read LFAE…SAVF and IGFA…AYAV. The NPA 1 signature appears at 62–64; it reads NPA.

It belongs to the MIP/aquaporin (TC 1.A.8) family. As to quaternary structure, homotetramer.

It localises to the cell membrane. It carries out the reaction H2O(in) = H2O(out). Channel that permits osmotically driven movement of water in both directions. It is involved in the osmoregulation and in the maintenance of cell turgor during volume expansion in rapidly growing cells. It mediates rapid entry or exit of water in response to abrupt changes in osmolarity. The polypeptide is Aquaporin Z (Flavobacterium johnsoniae (Cytophaga johnsonae)).